A 546-amino-acid chain; its full sequence is Probable protein kinase UbiB (546 aa).

Positions 124–502 (DFEIKPLASA…HVRQGQSRYF (379 aa)) constitute a Protein kinase domain. Residues 130 to 138 (LASASIAQV) and Lys153 contribute to the ATP site. Asp288 functions as the Proton acceptor in the catalytic mechanism. A run of 2 helical transmembrane segments spans residues 501–521 (YFLG…VSRP) and 522–542 (EWGL…FVGW).

The protein belongs to the ABC1 family. UbiB subfamily.

It is found in the cell inner membrane. It functions in the pathway cofactor biosynthesis; ubiquinone biosynthesis [regulation]. Functionally, is probably a protein kinase regulator of UbiI activity which is involved in aerobic coenzyme Q (ubiquinone) biosynthesis. The polypeptide is Probable protein kinase UbiB (Shigella boydii serotype 18 (strain CDC 3083-94 / BS512)).